The following is a 739-amino-acid chain: Phosphoribosylformylglycinamidine synthase subunit PurL (739 aa).

Residue His-54 is part of the active site. Tyr-57 and Lys-96 together coordinate ATP. Residue Glu-98 participates in Mg(2+) binding. Substrate-binding positions include Ser-99–His-102 and Arg-121. His-100 acts as the Proton acceptor in catalysis. Position 122 (Asp-122) interacts with Mg(2+). Gln-245 is a substrate binding site. Asp-273 serves as a coordination point for Mg(2+). Glu-317–Gln-319 is a binding site for substrate. The ATP site is built by Asp-500 and Gly-537. Asn-538 provides a ligand contact to Mg(2+). A substrate-binding site is contributed by Ser-540.

Belongs to the FGAMS family. As to quaternary structure, monomer. Part of the FGAM synthase complex composed of 1 PurL, 1 PurQ and 2 PurS subunits.

The protein localises to the cytoplasm. The catalysed reaction is N(2)-formyl-N(1)-(5-phospho-beta-D-ribosyl)glycinamide + L-glutamine + ATP + H2O = 2-formamido-N(1)-(5-O-phospho-beta-D-ribosyl)acetamidine + L-glutamate + ADP + phosphate + H(+). It participates in purine metabolism; IMP biosynthesis via de novo pathway; 5-amino-1-(5-phospho-D-ribosyl)imidazole from N(2)-formyl-N(1)-(5-phospho-D-ribosyl)glycinamide: step 1/2. Functionally, part of the phosphoribosylformylglycinamidine synthase complex involved in the purines biosynthetic pathway. Catalyzes the ATP-dependent conversion of formylglycinamide ribonucleotide (FGAR) and glutamine to yield formylglycinamidine ribonucleotide (FGAM) and glutamate. The FGAM synthase complex is composed of three subunits. PurQ produces an ammonia molecule by converting glutamine to glutamate. PurL transfers the ammonia molecule to FGAR to form FGAM in an ATP-dependent manner. PurS interacts with PurQ and PurL and is thought to assist in the transfer of the ammonia molecule from PurQ to PurL. The chain is Phosphoribosylformylglycinamidine synthase subunit PurL from Bacillus cereus (strain ZK / E33L).